The chain runs to 201 residues: Small ribosomal subunit protein uS4 (201 aa).

A disordered region spans residues 1–45 (MARYTGPLTKKSRRLGTDLVGNDKSFERRPYPPGVHGRGRTKDSE). The region spanning 91-157 (SRLDNVVYRA…PPIVIARETF (67 aa)) is the S4 RNA-binding domain.

Belongs to the universal ribosomal protein uS4 family. Part of the 30S ribosomal subunit. Contacts protein S5. The interaction surface between S4 and S5 is involved in control of translational fidelity.

In terms of biological role, one of the primary rRNA binding proteins, it binds directly to 16S rRNA where it nucleates assembly of the body of the 30S subunit. Its function is as follows. With S5 and S12 plays an important role in translational accuracy. This Cutibacterium acnes (strain DSM 16379 / KPA171202) (Propionibacterium acnes) protein is Small ribosomal subunit protein uS4.